A 131-amino-acid polypeptide reads, in one-letter code: MVTLYSSPSCTSCRKAKLWLEENHIPYTERNIFSDPLTIEEIKEILRMTESGTDEIISTRSKVFQELNVNLESLPLQDLYKMIRDYPGILRRPIMIDEKRLQVGYNEDEIRRFLPRTVRTFQLREAQRLVN.

The cysteines at positions 10 and 13 are disulfide-linked.

It belongs to the ArsC family. Spx subfamily. As to quaternary structure, interacts with the C-terminal domain of the alpha subunit of the RNAP.

Its subcellular location is the cytoplasm. Global transcriptional regulator that plays a key role in stress response and exerts either positive or negative regulation of genes. Acts by interacting with the C-terminal domain of the alpha subunit of the RNA polymerase (RNAP). This interaction can enhance binding of RNAP to the promoter region of target genes and stimulate their transcription, or block interaction of RNAP with activator. In Bacillus anthracis, this protein is Global transcriptional regulator Spx 1.